Here is a 771-residue protein sequence, read N- to C-terminus: Probable exo-1,4-beta-xylosidase bxlB (771 aa).

Residues 1 to 25 (MVGLTPQHYGNAIALMTYLASTALA) form the signal peptide. N-linked (GlcNAc...) asparagine glycosylation occurs at N67. The active site involves D293. N305, N345, N423, N462, and N463 each carry an N-linked (GlcNAc...) asparagine glycan.

Belongs to the glycosyl hydrolase 3 family.

The protein localises to the secreted. The enzyme catalyses Hydrolysis of (1-&gt;4)-beta-D-xylans, to remove successive D-xylose residues from the non-reducing termini.. It functions in the pathway glycan degradation; xylan degradation. Functionally, xylan 1,4-beta-xylosidase involved in the hydrolysis of xylan, a major structural heterogeneous polysaccharide found in plant biomass representing the second most abundant polysaccharide in the biosphere, after cellulose. The polypeptide is Probable exo-1,4-beta-xylosidase bxlB (bxlB) (Aspergillus clavatus (strain ATCC 1007 / CBS 513.65 / DSM 816 / NCTC 3887 / NRRL 1 / QM 1276 / 107)).